The following is a 345-amino-acid chain: Phosphate import ATP-binding protein PstB 2 (345 aa).

The interval Met1–Glu57 is disordered. The segment covering Glu8–Ala18 has biased composition (basic and acidic residues). Residues Asp19 to Ala35 show a composition bias toward low complexity. A compositionally biased stretch (gly residues) spans Gly42 to Glu52. The ABC transporter domain occupies Val86 to Val340. Gly118–Ser125 is an ATP binding site.

It belongs to the ABC transporter superfamily. Phosphate importer (TC 3.A.1.7) family. As to quaternary structure, the complex is composed of two ATP-binding proteins (PstB), two transmembrane proteins (PstC and PstA) and a solute-binding protein (PstS).

The protein resides in the cell membrane. It catalyses the reaction phosphate(out) + ATP + H2O = ADP + 2 phosphate(in) + H(+). Part of the ABC transporter complex PstSACB involved in phosphate import. Responsible for energy coupling to the transport system. This Halobacterium salinarum (strain ATCC 700922 / JCM 11081 / NRC-1) (Halobacterium halobium) protein is Phosphate import ATP-binding protein PstB 2.